Consider the following 505-residue polypeptide: Calcium/calmodulin-dependent protein kinase kinase 1 (505 aa).

The interval 27–66 (HLEEAEEGPEPASNGVDPPPRARAASVIPGSASRPTPVRP) is disordered. Serine 67 and serine 74 each carry phosphoserine. Arginine 78 bears the Asymmetric dimethylarginine mark. The residue at position 100 (serine 100) is a Phosphoserine. Residue threonine 108 is modified to Phosphothreonine. Residues 128–409 (YKLQSEIGKG…VSDIKLHPWV (282 aa)) enclose the Protein kinase domain. Residues 134-142 (IGKGAYGVV) and lysine 157 each bind ATP. The segment at 167–189 (QYGFPRRPPPRGSQAPQGGPAKQ) is RP domain. Catalysis depends on aspartate 275, which acts as the Proton acceptor. Residues 435–440 (KNSVKL) form an autoinhibitory domain region. The interval 438–463 (VKLIPSWTTVILVKSMLRKRSFGNPF) is calmodulin-binding. 3 positions are modified to phosphoserine: serine 458, serine 475, and serine 492. A disordered region spans residues 460–505 (GNPFEPQARREERSMSAPGNLLLKEGCGEGGKSPELPGVQEDEAAS).

The protein belongs to the protein kinase superfamily. Ser/Thr protein kinase family. Interacts with CAMK4 and calmodulin. In terms of processing, appears to be autophosphorylated. Phosphorylated at multiple sites by PRCAKA/PKA. Phosphorylation of Ser-458 is blocked upon binding to Ca(2+)/calmodulin. May be phosphorylated by CAMK1 and CAMK4. In terms of tissue distribution, mostly expressed in the brain with higher levels in cortex and hippocampus. Lower expression levels were detected in striatum, nucleus accumbens and cerebellum (at protein level). Abundant in forebrain, weaker in cerebellum and also detected in thymus and spleen.

The protein resides in the cytoplasm. Its subcellular location is the nucleus. The enzyme catalyses L-seryl-[protein] + ATP = O-phospho-L-seryl-[protein] + ADP + H(+). It catalyses the reaction L-threonyl-[protein] + ATP = O-phospho-L-threonyl-[protein] + ADP + H(+). Its activity is regulated as follows. Activated by Ca(2+)/calmodulin. Binding of calmodulin may relieve intrasteric autoinhibition. Partially inhibited upon phosphorylation by PRCAKA/PKA. May be regulated through phosphorylation by CAMK1 and CAMK4. Functionally, calcium/calmodulin-dependent protein kinase that belongs to a proposed calcium-triggered signaling cascade involved in a number of cellular processes. Phosphorylates CAMK1, CAMK1D, CAMK1G and CAMK4. Involved in regulating cell apoptosis. Promotes cell survival by phosphorylating AKT1/PKB that inhibits pro-apoptotic BAD/Bcl2-antagonist of cell death. In Rattus norvegicus (Rat), this protein is Calcium/calmodulin-dependent protein kinase kinase 1 (Camkk1).